Reading from the N-terminus, the 187-residue chain is Resolvase OPG149 (187 aa).

The protein belongs to the RuvC family. Poxviruses-type subfamily. Requires Mg(2+) as cofactor.

Its function is as follows. Plays a role in DNA replication by cleaving viral DNA concatamers to yield unit-length viral genomes. The concatamer junctions contain inverted repeat sequences that can be extruded as cruciforms, yielding Holliday junctions that A22 protein cleaves. The protein is Resolvase OPG149 (OPG149) of Variola virus (isolate Human/India/Ind3/1967) (VARV).